Here is a 377-residue protein sequence, read N- to C-terminus: Trans-enoyl reductase FMN2 (377 aa).

The 364-residue stretch at 7 to 370 (NASGGYCLNS…DGVIRGKKLV (364 aa)) folds into the Enoyl reductase (ER) domain. A disordered region spans residues 143 to 173 (LSDMTGNGRSNGYTNGHTNGHTNGHSKGEEE). Residues 144-155 (SDMTGNGRSNGY) show a composition bias toward polar residues. Low complexity predominate over residues 156–167 (TNGHTNGHTNGH). NADP(+) contacts are provided by residues 186–189 (ASAS), 209–212 (SPAN), tyrosine 227, and 274–275 (LD).

Belongs to the zinc-containing alcohol dehydrogenase family.

Its pathway is secondary metabolite biosynthesis. Trans-enoyl reductase; part of the gene cluster that mediates the biosynthesis of fusamarins, isocoumarin derivatives that show moderate cytotoxicity with IC(50) values between 1 and 50 uM. The polyketide synthase FMN1 probably synthesizes two different polyketides, a tetra- and a pentaketide, containinga varying number of double bonds depending on the selective actions of the trans-enoyl reductase FMN2. Chain fusion will presumably be mediated by the KS domain before finally offloading is catalyzed by the alpha/beta hydrolase fold enzyme FMN3. The protein is Trans-enoyl reductase FMN2 of Fusarium mangiferae (Mango malformation disease fungus).